Here is an 86-residue protein sequence, read N- to C-terminus: Small ribosomal subunit protein uS17 (86 aa).

The protein belongs to the universal ribosomal protein uS17 family. Part of the 30S ribosomal subunit.

Functionally, one of the primary rRNA binding proteins, it binds specifically to the 5'-end of 16S ribosomal RNA. The polypeptide is Small ribosomal subunit protein uS17 (Helicobacter acinonychis (strain Sheeba)).